The chain runs to 411 residues: Serine/threonine transporter SstT (411 aa).

9 helical membrane-spanning segments follow: residues 14 to 34, 43 to 63, 82 to 102, 141 to 161, 192 to 212, 218 to 238, 290 to 310, 330 to 350, and 357 to 377; these read GSLV…ASVA, FLGG…VFIL, IIML…VMSF, ALMS…GFAL, IGIF…ALAG, AVLL…IVFF, IPLG…VLTL, VVAA…LLLI, and FGIP…IGVI.

The protein belongs to the dicarboxylate/amino acid:cation symporter (DAACS) (TC 2.A.23) family.

Its subcellular location is the cell inner membrane. The catalysed reaction is L-serine(in) + Na(+)(in) = L-serine(out) + Na(+)(out). It carries out the reaction L-threonine(in) + Na(+)(in) = L-threonine(out) + Na(+)(out). In terms of biological role, involved in the import of serine and threonine into the cell, with the concomitant import of sodium (symport system). The chain is Serine/threonine transporter SstT from Photobacterium profundum (strain SS9).